The chain runs to 164 residues: Protein-export protein SecB (164 aa).

This sequence belongs to the SecB family. In terms of assembly, homotetramer, a dimer of dimers. One homotetramer interacts with 1 SecA dimer.

It localises to the cytoplasm. Its function is as follows. One of the proteins required for the normal export of preproteins out of the cell cytoplasm. It is a molecular chaperone that binds to a subset of precursor proteins, maintaining them in a translocation-competent state. It also specifically binds to its receptor SecA. In Zymomonas mobilis subsp. mobilis (strain ATCC 31821 / ZM4 / CP4), this protein is Protein-export protein SecB.